The following is a 956-amino-acid chain: Calsyntenin-3 (956 aa).

The N-terminal stretch at 1–19 (MTLLLLPLLLASLLASCSC) is a signal peptide. Residues 1 to 30 (MTLLLLPLLLASLLASCSCNKANKHKPWIE) lie on the Cytoplasmic side of the membrane. Residues 20 to 847 (NKANKHKPWI…SHRNSMIPSA (828 aa)) are Extracellular-facing. 2 consecutive Cadherin domains span residues 29 to 145 (IEAE…APVF) and 146 to 246 (VERL…KPSW). The segment at residues 31 to 51 (AEYQGIVMENDNTVLLNPPLF) is an intramembrane region (helical). The Cytoplasmic segment spans residues 52 to 71 (ALDKDAPLRYAGEICGFRLH). An intramembrane region (helical) is located at residues 72–94 (GSGVPFEAVILDKATGEGLIRAK). Residues 95-151 (EPVDCEAQKEHTFTIQAYDCGEGPDGANTKKSHKATVHVRVNDVNEFAPVFVERLYR) are Cytoplasmic-facing. The helical intramembrane region spans 152–172 (AAVTEGKLYDRILRVEAIDGD). The Cytoplasmic segment spans residues 173-255 (CSPQYSQICY…WQGWNKRIEY (83 aa)). The chain crosses the membrane as a helical span at residues 256–276 (APGAGSLALFPGIRLETCDEP). At 277–364 (LWNIQATIEL…PLGGPSGLGS (88 aa)) the chain is on the lumenal side. 5 N-linked (GlcNAc...) asparagine glycosylation sites follow: Asn299, Asn327, Asn347, Asn507, and Asn740. The chain crosses the membrane as a helical span at residues 848 to 868 (ATLIIVVCVGFLVLMVVLGLV). Residues 869–956 (RIHSLHRRVS…RIIETPPHRY (88 aa)) are Cytoplasmic-facing. The tract at residues 916 to 956 (QSCVTGAVGGQQEDEDSSDSEVADSPSSDERRIIETPPHRY) is disordered. Residues 927–937 (QEDEDSSDSEV) are compositionally biased toward acidic residues. A compositionally biased stretch (basic and acidic residues) spans 943–956 (SDERRIIETPPHRY).

This sequence belongs to the calsyntenin family. In terms of assembly, interacts (via cadherin domains) with both alpha and beta isoforms of neurexins (NRXN1, NRXN2 and NRXN3). Directly interacts with APBA2. Forms a tripartite complex with APBA2 and APP. Interacts with low affinity with KLC1. Interacts with SLC23A2/SVCT2. As to quaternary structure, interacts with CIDEA; inhibiting the lipid transferase activity of CIDEA. Interacts with CIDEC; inhibiting the lipid transferase activity of CIDEC. In terms of processing, proteolytically processed under normal cellular conditions. A primary zeta-cleavage generates a large extracellular (soluble) N-terminal domain (sAlc) and a short C-terminal transmembrane fragment (CTF1). A secondary cleavage catalyzed by gamma-secretase within the transmembrane domain releases the beta-Alc-beta chain in the extracellular milieu and produces an intracellular fragment (AlcICD). This processing is strongly suppressed in the tripartite complex formed with APBA2 and APP, which seems to prevent the association with gamma-secretase. Post-translationally, ubiquitinated: endoplasmic reticulum-localized protein is ubiquitinated and degraded by the endoplasmic reticulum-associated degradation (ERAD) pathway. As to expression, according to PubMed:12498782, expressed predominantly in the brain and in kidney. Low levels in heart, skeletal muscle, liver, placenta, pancreas and lung. According to PubMed:12972431, predominant expression in brain, and only marginal in kidney. In brain, present throughout all cortical layers, highest levels in GABAergic neurons (based on morphology and distribution pattern). Expression is restricted to adipose tissue, with high expression in multilocular thermogenic adipocytes (brown adipose tissue).

It is found in the postsynaptic cell membrane. Its subcellular location is the endoplasmic reticulum membrane. The protein localises to the golgi apparatus membrane. The protein resides in the cell projection. It localises to the dendrite. It is found in the lipid droplet. Its function is as follows. Postsynaptic adhesion molecule that binds to presynaptic neurexins to mediate both excitatory and inhibitory synapse formation. Promotes synapse development by acting as a cell adhesion molecule at the postsynaptic membrane, which associates with both neurexin-alpha and neurexin-beta proteins at the presynaptic membrane. Regulates the balance between excitatory and inhibitory synapses by inhibiting formation of excitatory parallel-fiber synapses and promoting formation of inhibitory synapses in the same neuron. May also be involved in ascorbate (vitamin C) uptake via its interaction with SLC23A2/SVCT2. Complex formation with APBA2 and APP, stabilizes APP metabolism and enhances APBA2-mediated suppression of beta-APP40 secretion, due to the retardation of intracellular APP maturation. Adipose-specific isoform that plays a key role in adaptive thermogenesis. Facilitates the efficient use of stored triglyceride by promoting multilocular morphology of thermogenic adipocytes: acts by inhibiting the activity of CIDEA and CIDEC on lipid droplets, thereby preventing lipid droplet fusion and facilitating lipid utilization. May also participate in adaptive thermogenesis by promoting sympathetic innervation of thermogenic adipose tissue: acts by driving secretion of neurotrophic factor S100B from brown adipocytes, stimulating neurite outgrowth from sympathetic neurons. This chain is Calsyntenin-3, found in Homo sapiens (Human).